A 445-amino-acid polypeptide reads, in one-letter code: 6-phosphogluconate dehydrogenase, decarboxylating (445 aa).

Residues Ala-1–Gly-4, Asn-22–Ser-24, Val-63–Ala-65, and Asn-91 each bind NADP(+). Substrate is bound by residues Asn-91 and Ser-117 to Gly-119. The active-site Proton acceptor is Lys-172. Substrate is bound at residue His-175 to Asn-176. The active-site Proton donor is Glu-179. Tyr-180, Lys-249, Arg-276, Arg-434, and His-440 together coordinate substrate.

The protein belongs to the 6-phosphogluconate dehydrogenase family. Homodimer.

The catalysed reaction is 6-phospho-D-gluconate + NADP(+) = D-ribulose 5-phosphate + CO2 + NADPH. Its pathway is carbohydrate degradation; pentose phosphate pathway; D-ribulose 5-phosphate from D-glucose 6-phosphate (oxidative stage): step 3/3. In terms of biological role, catalyzes the oxidative decarboxylation of 6-phosphogluconate to ribulose 5-phosphate and CO(2), with concomitant reduction of NADP to NADPH. In Raoultella planticola (Klebsiella planticola), this protein is 6-phosphogluconate dehydrogenase, decarboxylating (gnd).